Here is a 227-residue protein sequence, read N- to C-terminus: D-lyxose/D-mannose isomerase (227 aa).

Residues lysine 90, 103-110 (HFHWRKRE), histidine 171, glutamate 186, and aspartate 193 each bind D-fructose. Residues histidine 103, histidine 105, glutamate 110, and histidine 171 each coordinate Mn(2+).

The protein belongs to the D-lyxose ketol-isomerase family. In terms of assembly, homodimer; disulfide-linked. Dimerization is facilitated through a disulfide bond between the two monomers of the dimeric enzyme. Mn(2+) is required as a cofactor.

It catalyses the reaction D-lyxose = D-xylulose. The enzyme catalyses D-mannose = D-fructose. Its function is as follows. Sugar isomerase that catalyzes the reversible isomerization of D-lyxose to D-xylulose, and D-mannose to D-fructose. Shows similar activity toward D-lyxose and D-mannose with a turnover and catalytic efficiency for D-lyxose as a substrate only 1.1- and 1.3-fold higher than those for D-mannose, respectively. Shows weaker activity with L-gulose, D-talose, L-ribose and L-allose. Overexpression enables cell growth on the rare pentose D-lyxose as the sole carbon source. In Escherichia coli O157:H7, this protein is D-lyxose/D-mannose isomerase.